The sequence spans 1605 residues: Ribosome-binding protein 1 (1605 aa).

At 1–7 (MDIYDTQ) the chain is on the lumenal side. The helical transmembrane segment at 8–28 (TLGVVVFGGFMVVSAIGIFLV) threads the bilayer. The Cytoplasmic portion of the chain corresponds to 29–1605 (STFSMKETSY…GSSSKEGTSV (1577 aa)). Residues 44-88 (NQRKEMAKTHHQKGEKKKKEKTVEKKGKTKKKEEKPNGKIPEHDL) are disordered. Residues 52–63 (THHQKGEKKKKE) show a composition bias toward basic residues. Over residues 64–88 (KTVEKKGKTKKKEEKPNGKIPEHDL) the composition is skewed to basic and acidic residues. A Phosphoserine modification is found at Ser-111. Residues 114 to 150 (SSVGHTPIATVPAMPQEKLASSPKDRKKKEKKVAKVE) form a disordered region. Residue Lys-148 forms a Glycyl lysine isopeptide (Lys-Gly) (interchain with G-Cter in SUMO2) linkage. A phosphoserine mark is found at Ser-159 and Ser-165. The segment at 172-849 (ATPKEVPMVA…PGPPDCDGPL (678 aa)) is disordered. 61 repeat units span residues 196–205 (SQGKKGQGAQ), 206–215 (NQAKKGEGAQ), 216–225 (NQGKKGEGAQ), 226–235 (NQAKKGEGAQ), 236–245 (NQAKKGEGAQ), 246–255 (NQGKKGEGAQ), 256–265 (NQAKKGEGGQ), 266–275 (NQAKKGEGAQ), 276–285 (NQGKKGEGAQ), 286–295 (NQGKKGEGAQ), 296–305 (NQAKKGEGAQ), 306–315 (NQAKKGEGAQ), 316–325 (NQGKKGEGAQ), 326–335 (NQSKKGEGAQ), 336–345 (NQAKKGEGGQ), 346–355 (NQAKKGEGAQ), 356–365 (NQAKKGEGAQ), 366–375 (NQAKKGEGVQ), 376–385 (NQAKKGVEGA), 386–395 (QNQGKKGEAN), 396–405 (QNQAKKGEGG), 406–415 (QNQTKKGEGP), 416–425 (QNQGKKGEAA), 426–435 (QKQDKKIEGA), 436–445 (QNQGKKPEGT), 446–455 (SNQGKKGEGA), 456–465 (QNQGKKGEGA), 466–475 (QNQSKKGEGA), 476–485 (QNQAKKGEGG), 486–495 (QNQAKKGEGA), 496–505 (QNQAKKGEGA), 506–515 (QNQAKKGEGV), 516–525 (QNQAKKGVEG), 527–536 (QNQGKKGEAN), 537–546 (QNQAKKGEGG), 547–556 (QNQTKKGEGP), 557–566 (QNQGKKGEAA), 567–576 (QKQDKKIEGA), 577–586 (QNQGKKPEGT), 587–596 (SNQGKKGEGA), 597–606 (QNQGKKGEGA), 607–616 (QNQGKKGEGA), 617–626 (QNQGKKGEGA), 628–637 (NQGKKGEGAQ), 638–647 (NQGKKGEGAQ), 648–657 (NQGKKGEGAQ), 658–667 (NQGKKGEGPQ), 668–677 (NQAKKGEGAQ), 678–687 (NQGKKGEGAQ), 688–697 (NQGKKGEGAQ), 698–707 (NQGKKAEGVQ), 708–717 (SQSKKGEGTQ), 718–727 (NQGKKGDGNP), 729–738 (QGKKGEGASN), 739–748 (QNRKTDTVAN), 749–758 (QGTKQEGVSN), 759–768 (QVKKSEGSPN), 769–778 (QGKKAEGAPN), 779–788 (QGKKKDGSPS), 789–798 (QAKKVDAAAN), and 799–808 (QGKKSEMAPA). A 61 X 10 AA tandem repeats of [NSQ]-[NKQVGA]-[GSAQKRT]-[ASGDTK]-[KGTQSAV]-[KGAED]-[EQVGIPTDMA]-[EGVAS]-[AGVPETNS]-[AQNGPTVS] region spans residues 196–808 (SQGKKGQGAQ…QGKKSEMAPA (613 aa)). A compositionally biased stretch (low complexity) spans 197–208 (QGKKGQGAQNQA). 4 stretches are compositionally biased toward polar residues: residues 224–258 (AQNQ…QNQA), 274–338 (AQNQ…QNQA), 354–378 (AQNQ…QNQA), and 385–399 (AQNQ…QNQA). The segment covering 420–433 (KKGEAAQKQDKKIE) has biased composition (basic and acidic residues). Composition is skewed to polar residues over residues 435 to 479 (AQNQ…QNQA), 495 to 519 (AQNQ…QNQA), and 526 to 540 (AQNQ…QNQA). The span at 561–574 (KKGEAAQKQDKKIE) shows a compositional bias: basic and acidic residues. Polar residues-rich tracts occupy residues 576–720 (AQNQ…QNQG) and 736–769 (ASNQ…SPNQ). Position 786 is a phosphoserine (Ser-786). Positions 811–821 (QKASMVQSQEA) are enriched in polar residues. Residue Ser-818 is modified to Phosphoserine. Lys-823 is covalently cross-linked (Glycyl lysine isopeptide (Lys-Gly) (interchain with G-Cter in SUMO1)). Lys-1135 carries the N6-acetyllysine modification. Ser-1162 and Ser-1178 each carry phosphoserine. 2 disordered regions span residues 1460–1481 (MRSH…AEQD) and 1571–1605 (TTQE…GTSV). Residues 1576 to 1598 (LTKEKDTVKKLQEQLGKAEDGSS) are compositionally biased toward basic and acidic residues.

Widely expressed.

Its subcellular location is the endoplasmic reticulum membrane. In terms of biological role, acts as a ribosome receptor and mediates interaction between the ribosome and the endoplasmic reticulum membrane. The polypeptide is Ribosome-binding protein 1 (Rrbp1) (Mus musculus (Mouse)).